A 115-amino-acid chain; its full sequence is Prefoldin subunit beta (115 aa).

It belongs to the prefoldin subunit beta family. As to quaternary structure, heterohexamer of two alpha and four beta subunits.

Its subcellular location is the cytoplasm. In terms of biological role, molecular chaperone capable of stabilizing a range of proteins. Seems to fulfill an ATP-independent, HSP70-like function in archaeal de novo protein folding. The protein is Prefoldin subunit beta of Methanococcus aeolicus (strain ATCC BAA-1280 / DSM 17508 / OCM 812 / Nankai-3).